A 265-amino-acid polypeptide reads, in one-letter code: Small ribosomal subunit protein uS2 (265 aa).

The tract at residues 226-265 is disordered; it reads AAAPNSASVREEEFSADAADEGKGRRAPAKKGDKKADAAE. Basic and acidic residues predominate over residues 245–265; it reads DEGKGRRAPAKKGDKKADAAE.

This sequence belongs to the universal ribosomal protein uS2 family.

This is Small ribosomal subunit protein uS2 from Xanthomonas axonopodis pv. citri (strain 306).